We begin with the raw amino-acid sequence, 663 residues long: Polyunsaturated fatty acid lipoxygenase ALOX15 (663 aa).

One can recognise a PLAT domain in the interval 2–115; that stretch reads GLYRVRVSTG…ILSLPEGTGR (114 aa). Residues 116 to 663 form the Lipoxygenase domain; it reads TVVDDPQGLF…PSLVENSVAI (548 aa). Fe cation contacts are provided by His361, His366, His541, His545, and Ile663.

It belongs to the lipoxygenase family. In terms of assembly, interacts with PEBP1; in response to IL13/interleukin-13, prevents the interaction of PEBP1 with RAF1 to activate the ERK signaling cascade. Fe cation is required as a cofactor. In terms of tissue distribution, detected in tracheal epithelium.

Its subcellular location is the cytoplasm. The protein localises to the cytosol. It localises to the cell membrane. The protein resides in the lipid droplet. The catalysed reaction is (5Z,8Z,11Z,14Z)-eicosatetraenoate + O2 = (12S)-hydroperoxy-(5Z,8Z,10E,14Z)-eicosatetraenoate. It carries out the reaction (5Z,8Z,11Z,14Z)-eicosatetraenoate + O2 = (15S)-hydroperoxy-(5Z,8Z,11Z,13E)-eicosatetraenoate. It catalyses the reaction (9Z,12Z)-octadecadienoate + O2 = (13S)-hydroperoxy-(9Z,11E)-octadecadienoate. The enzyme catalyses (5Z,8Z,11Z,14Z)-eicosatetraenoate + 2 O2 = (14R,15S)-dihydroperoxy-(5Z,8Z,10E,12E)-eicosatetraenoate. The catalysed reaction is (5Z,8Z,11Z,14Z)-eicosatetraenoate + 2 O2 = (8S,15S)-dihydroperoxy-(5Z,9E,11Z,13E)-eicosatetraenoate. It carries out the reaction (14S,15R)-epoxy-(5Z,8Z,11Z)-eicosatrienoate + O2 = (8S)-hydroperoxy-(14S,15R)-epoxy-(5Z,9E,11Z)-eicosatrienoate. It catalyses the reaction (14S,15R)-epoxy-(5Z,8Z,11Z)-eicosatrienoate + O2 = (12S)-hydroperoxy-(14S,15R)-epoxy-(5Z,8Z,10E)-eicosatrienoate. The enzyme catalyses (14R,15S)-epoxy-(5Z,8Z,11Z)-eicosatrienoate + O2 = (5S)-hydroperoxy-(14R,15S)-epoxy-(6E,8Z,11Z)-eicosatrienoate. The catalysed reaction is (14R,15S)-epoxy-(5Z,8Z,11Z)-eicosatrienoate + O2 = (12S)-hydroperoxy-(14R,15S)-epoxy-(5Z,8Z,10E)-eicosatrienoate. It carries out the reaction (15R)-hydroperoxy-(5Z,8Z,11Z,13E)-eicosatetraenoate = 15-oxo-(5Z,8Z,11Z,13E)-eicosatetraenoate + H2O. It catalyses the reaction (15S)-hydroperoxy-(5Z,8Z,11Z,13E)-eicosatetraenoate = (14S,15S)-epoxy-(5Z,8Z,10E,12E)-eicosatetraenoate + H2O. The enzyme catalyses (12S)-hydroperoxy-(5Z,8Z,10E,14Z)-eicosatetraenoate = (8S)-hydroxy-(11S,12S)-epoxy-(5Z,9E,14Z)-eicosatrienoate. The catalysed reaction is (4Z,7Z,10Z,13Z,16Z)-docosapentaenoate + O2 = 14-hydroperoxy-(4Z,7Z,10Z,12E,16Z)-docosapentaenoate. It carries out the reaction (7Z,10Z,13Z,16Z,19Z)-docosapentaenoate + O2 = 14-hydroperoxy-(7Z,10Z,12E,16Z,19Z)-docosapentaenoate. It catalyses the reaction (4Z,7Z,10Z,13Z,16Z,19Z)-docosahexaenoate + O2 = (14S)-hydroperoxy-(4Z,7Z,10Z,12E,16Z,19Z)-docosahexaenoate. The enzyme catalyses (4Z,7Z,10Z,13Z,16Z,19Z)-docosahexaenoate + O2 = (17S)-hydroperoxy-(4Z,7Z,10Z,13Z,15E,19Z)-docosahexaenoate. The catalysed reaction is (7S)-hydroperoxy-(4Z,8E,10Z,13Z,16Z,19Z)-docosahexaenoate + O2 = (7S,14S)-dihydroperoxy-(4Z,8E,10Z,12E,16Z,19Z)-docosahexaenoate. It carries out the reaction (7S)-hydroperoxy-(4Z,8E,10Z,13Z,16Z,19Z)-docosahexaenoate + O2 = (7S,17S)-dihydroperoxy-(4Z,8E,10Z,13Z,15E,19Z)-docosahexaenoate. It catalyses the reaction (4Z,7Z,10Z,13Z,16Z,19Z)-docosahexaenoate + O2 = (11S)-hydroperoxy-(4Z,7Z,9E,13Z,16Z,19Z)-docosahexaenoate. The enzyme catalyses N-(5Z,8Z,11Z,14Z)-eicosatetraenoyl-taurine + O2 = N-(12S)-hydroperoxy-(5Z,8Z,10E,14Z)-eicosatetraenoyl-taurine. The catalysed reaction is N-(5Z,8Z,11Z,14Z)-eicosatetraenoyl-gamma-aminobutanoate + O2 = N-(12S)-hydroperoxy-(5Z,8Z,10E,14Z)-eicosatetraenoyl-gamma-aminobutanoate. It carries out the reaction N-(5Z,8Z,11Z,14Z)-eicosatetraenoyl-glycine + O2 = N-(12S)-hydroperoxy-(5Z,8Z,10E,14Z)-eicosatetraenoyl-glycine. It catalyses the reaction N-(5Z,8Z,11Z,14Z)-eicosatetraenoyl-L-alanine + O2 = N-(12S)-hydroperoxy-(5Z,8Z,10E,14Z)-eicosatetraenoyl-alanine. The enzyme catalyses N-(5Z,8Z,11Z,14Z)-eicosatetraenoyl-taurine + O2 = N-(15S)-hydroperoxy-(5Z,8Z,11Z,13E)-eicosatetraenoyl-taurine. The catalysed reaction is N-(5Z,8Z,11Z,14Z)-eicosatetraenoyl-gamma-aminobutanoate + O2 = N-(15S)-hydroperoxy-(5Z,8Z,11Z,13E)-eicosatetraenoyl-gamma-aminobutanoate. It carries out the reaction N-(5Z,8Z,11Z,14Z)-eicosatetraenoyl-glycine + O2 = N-(15S)-hydroperoxy-(5Z,8Z,11Z,13E)-eicosatetraenoyl-glycine. It catalyses the reaction N-(5Z,8Z,11Z,14Z)-eicosatetraenoyl-L-alanine + O2 = N-(15S)-hydroperoxy-(5Z,8Z,11Z,13E)-eicosatetraenoyl-alanine. The protein operates within lipid metabolism; hydroperoxy eicosatetraenoic acid biosynthesis. Functionally, non-heme iron-containing dioxygenase that catalyzes the stereo-specific peroxidation of free and esterified polyunsaturated fatty acids generating a spectrum of bioactive lipid mediators. It inserts peroxyl groups at C12 or C15 of arachidonate ((5Z,8Z,11Z,14Z)-eicosatetraenoate) producing both 12-hydroperoxyeicosatetraenoate/12-HPETE and 15-hydroperoxyeicosatetraenoate/15-HPETE. It may then act on 12-HPETE to produce hepoxilins, which may show pro-inflammatory properties. Can also peroxidize linoleate ((9Z,12Z)-octadecadienoate) to 13-hydroperoxyoctadecadienoate. May participate in the sequential oxidations of DHA ((4Z,7Z,10Z,13Z,16Z,19Z)-docosahexaenoate) to generate specialized pro-resolving mediators (SPMs)like resolvin D5 ((7S,17S)-diHPDHA) and (7S,14S)-diHPDHA, that actively down-regulate the immune response and have anti-aggregation properties with platelets. Can convert epoxy fatty acids to hydroperoxy-epoxides derivatives followed by an intramolecular nucleophilic substitution leading to the formation of monocyclic endoperoxides. Plays an important role during the maintenance of self-tolerance by peroxidizing membrane-bound phosphatidylethanolamine which can then signal the sorting process for clearance of apoptotic cells during inflammation and prevent an autoimmune response. In addition to its role in the immune and inflammatory responses, this enzyme may play a role in epithelial wound healing in the cornea through production of lipoxin A4 (LXA(4)) and docosahexaenoic acid-derived neuroprotectin D1 (NPD1; 10R,17S-HDHA), both lipid autacoids exhibit anti-inflammatory and neuroprotective properties. Furthermore, it may regulate actin polymerization which is crucial for several biological processes such as the phagocytosis of apoptotic cells. It is also implicated in the generation of endogenous ligands for peroxisome proliferator activated receptor (PPAR-gamma), hence modulating macrophage development and function. It may also exert a negative effect on skeletal development by regulating bone mass through this pathway. As well as participates in ER stress and downstream inflammation in adipocytes, pancreatic islets, and liver. Finally, it is also involved in the cellular response to IL13/interleukin-13. This chain is Polyunsaturated fatty acid lipoxygenase ALOX15, found in Bos taurus (Bovine).